A 485-amino-acid chain; its full sequence is Glutamyl-tRNA(Gln) amidotransferase subunit A (485 aa).

Residues Lys-78 and Ser-153 each act as charge relay system in the active site. The active-site Acyl-ester intermediate is the Ser-177.

It belongs to the amidase family. GatA subfamily. As to quaternary structure, heterotrimer of A, B and C subunits.

The enzyme catalyses L-glutamyl-tRNA(Gln) + L-glutamine + ATP + H2O = L-glutaminyl-tRNA(Gln) + L-glutamate + ADP + phosphate + H(+). Allows the formation of correctly charged Gln-tRNA(Gln) through the transamidation of misacylated Glu-tRNA(Gln) in organisms which lack glutaminyl-tRNA synthetase. The reaction takes place in the presence of glutamine and ATP through an activated gamma-phospho-Glu-tRNA(Gln). The sequence is that of Glutamyl-tRNA(Gln) amidotransferase subunit A from Bacillus cereus (strain Q1).